Here is a 433-residue protein sequence, read N- to C-terminus: sn-glycerol-3-phosphate-binding periplasmic protein UgpB (433 aa).

An N-terminal signal peptide occupies residues 1–25; that stretch reads MFTRLITTSALTGAIALTIGSQAFA. The sn-glycerol 3-phosphate site is built by tyrosine 67, aspartate 91, serine 146, serine 273, glycine 307, tyrosine 346, and arginine 397.

This sequence belongs to the bacterial solute-binding protein 1 family. In terms of assembly, the complex is composed of two ATP-binding proteins (UgpC), two transmembrane proteins (UgpA and UgpE) and a solute-binding protein (UgpB).

It is found in the periplasm. Functionally, part of the ABC transporter complex UgpBAEC involved in sn-glycerol-3-phosphate (G3P) import. Binds G3P. This chain is sn-glycerol-3-phosphate-binding periplasmic protein UgpB (ugpB), found in Brucella melitensis biotype 1 (strain ATCC 23456 / CCUG 17765 / NCTC 10094 / 16M).